The following is a 467-amino-acid chain: Nuclear distribution protein PAC1 (467 aa).

Residues 62–96 are a coiled coil; the sequence is GSIIRLQRAITKLEQKCDALQQELDDKTKQLETIV. 7 WD repeats span residues 121–160, 164–212, 219–262, 264–302, 325–365, 385–424, and 426–466; these read QNESPVTAIKLHPSLAIVYVGTDTGRLIAYDILNYTIPLA, AHSK…GELK, AHDS…QSFS, HSEWVKSIDVLDEYILSGSLDSTLRLTHWPSGNGLSVGT, PYRD…LKPN, GHTSWVKDLKLRGDHLFSCSDDETIKCWDLNTGNCVKTWS, and IHNN…VKII.

This sequence belongs to the WD repeat LIS1/nudF family. In terms of assembly, self-associates. Interacts with NDL1 and dynein.

Its subcellular location is the cytoplasm. The protein resides in the cytoskeleton. It is found in the spindle pole. Its function is as follows. Positively regulates the activity of the minus-end directed microtubule motor protein dynein. Plays a central role in positioning the mitotic spindle at the bud neck during cell division. Targets cytoplasmic dynein to microtubule plus ends, thereby promoting dynein-mediated microtubule sliding along the bud cortex and consequently the movement of the mitotic spindle to the bud neck. This is Nuclear distribution protein PAC1 from Candida glabrata (strain ATCC 2001 / BCRC 20586 / JCM 3761 / NBRC 0622 / NRRL Y-65 / CBS 138) (Yeast).